A 460-amino-acid chain; its full sequence is Argininosuccinate lyase (460 aa).

It belongs to the lyase 1 family. Argininosuccinate lyase subfamily.

It is found in the cytoplasm. The enzyme catalyses 2-(N(omega)-L-arginino)succinate = fumarate + L-arginine. Its pathway is amino-acid biosynthesis; L-arginine biosynthesis; L-arginine from L-ornithine and carbamoyl phosphate: step 3/3. This is Argininosuccinate lyase from Streptococcus uberis (strain ATCC BAA-854 / 0140J).